The sequence spans 87 residues: Cytochrome c oxidase assembly factor 3, mitochondrial (87 aa).

Residues 47–69 traverse the membrane as a helical segment; it reads NNLLTAGALGVSVLAIYGYSIFS.

Belongs to the COA3 family.

It is found in the mitochondrion membrane. Plays a critical role in the biogenesis and activity of cytochrome c oxidase (COX) (complex IV). The protein is Cytochrome c oxidase assembly factor 3, mitochondrial (Ccdc56) of Drosophila melanogaster (Fruit fly).